Reading from the N-terminus, the 88-residue chain is Small ribosomal subunit protein bS16 (88 aa).

Belongs to the bacterial ribosomal protein bS16 family.

In Leptospira interrogans serogroup Icterohaemorrhagiae serovar Lai (strain 56601), this protein is Small ribosomal subunit protein bS16.